The chain runs to 454 residues: Pyrimidine/purine nucleotide 5'-monophosphate nucleosidase (454 aa).

It belongs to the LOG family.

The catalysed reaction is a pyrimidine ribonucleoside 5'-phosphate + H2O = a pyrimidine nucleobase + D-ribose 5-phosphate. It catalyses the reaction AMP + H2O = adenine + D-ribose 5-phosphate. The enzyme catalyses GMP + H2O = guanine + D-ribose 5-phosphate. It carries out the reaction CMP + H2O = cytosine + D-ribose 5-phosphate. The catalysed reaction is IMP + H2O = hypoxanthine + D-ribose 5-phosphate. It catalyses the reaction UMP + H2O = D-ribose 5-phosphate + uracil. The enzyme catalyses dTMP + H2O = 2-deoxy-D-ribose 5-phosphate + thymine. In terms of biological role, catalyzes the hydrolysis of the N-glycosidic bond of diverse pyrimidine and purine nucleotide 5'-monophosphates, to form ribose 5-phosphate and the corresponding free base. Can use AMP, GMP, IMP, CMP, dTMP and UMP as substrates. Cannot catalyze the reverse reactions. May contribute to nucleoside pool homeostasis by degrading excess nucleotides and feeding back the ribose moiety to catabolism. The sequence is that of Pyrimidine/purine nucleotide 5'-monophosphate nucleosidase from Escherichia coli O157:H7.